Here is a 595-residue protein sequence, read N- to C-terminus: Mitoguardin 1 (595 aa).

Transmembrane regions (helical) follow at residues 11–31 and 38–58; these read LPIK…YYSL and TGTK…IIIA.

It belongs to the mitoguardin family. In terms of assembly, homodimer and heterodimer; forms heterodimers with miga2.

It is found in the mitochondrion outer membrane. Regulator of mitochondrial fusion: acts by forming homo- and heterodimers at the mitochondrial outer membrane and facilitating the formation of pld6/MitoPLD dimers. May act by regulating phospholipid metabolism via pld6/MitoPLD. This Danio rerio (Zebrafish) protein is Mitoguardin 1.